The chain runs to 397 residues: MAKEKFTRNKPHVNVGTIGHIDHGKTTLTAAITKVASMKMGGKFVGYDEIDKAPEEKERGITIATAHVEYETPKRHYAHVDCPGHADYIKNMITGAAQMDGAIIVVAATDGPMPQTREHILLARQVGVPYLVVFMNKCDMVDDPELLELVELEIRELLSTYGYPGDDVPVIRGSALKALNSDSADSDDAKPILELLDACDSYIPDPQRDIDKPFLMPIEDVFSISGRGTVVTGRVERGVIKVGEEIEIVGIKPTIKTTCTGVEMFRKLLDQGEAGDNIGVLLRSVKRDEVERGQVLSALKSITPHRKFKAEVYVLSKEEGGRHTPFFSGYRPQFYCRTTDVTGVITLNEGVEMVMPGDNATFNVELIYPIAMEQGLRFAIREGGRTVGAGVVTEIVE.

The tr-type G domain maps to 10–207 (KPHVNVGTIG…ACDSYIPDPQ (198 aa)). Residues 19–26 (GHIDHGKT) form a G1 region. 19 to 26 (GHIDHGKT) is a GTP binding site. T26 is a binding site for Mg(2+). The interval 60-64 (GITIA) is G2. The interval 81 to 84 (DCPG) is G3. GTP contacts are provided by residues 81–85 (DCPGH) and 136–139 (NKCD). The interval 136–139 (NKCD) is G4. Residues 174-176 (SAL) form a G5 region.

Belongs to the TRAFAC class translation factor GTPase superfamily. Classic translation factor GTPase family. EF-Tu/EF-1A subfamily. Monomer.

It is found in the cytoplasm. The catalysed reaction is GTP + H2O = GDP + phosphate + H(+). Functionally, GTP hydrolase that promotes the GTP-dependent binding of aminoacyl-tRNA to the A-site of ribosomes during protein biosynthesis. The protein is Elongation factor Tu of Lawsonia intracellularis (strain PHE/MN1-00).